The primary structure comprises 434 residues: D-inositol 3-phosphate glycosyltransferase (434 aa).

His19 lines the 1D-myo-inositol 3-phosphate pocket. UDP-N-acetyl-alpha-D-glucosamine is bound by residues 25–26 (QP) and Gly33. 1D-myo-inositol 3-phosphate contacts are provided by residues 30–35 (DAGGMN), Lys88, Tyr121, Thr145, and Arg165. 3 residues coordinate UDP-N-acetyl-alpha-D-glucosamine: Arg239, Lys244, and Gln297. 3 residues coordinate Mg(2+): Tyr306, Arg307, and Ala309. Residues Glu319 and Glu327 each contribute to the UDP-N-acetyl-alpha-D-glucosamine site. Thr333 contributes to the Mg(2+) binding site. Residues 414-434 (HPRPAARRSGRRFSMRRGVRT) form a disordered region.

This sequence belongs to the glycosyltransferase group 1 family. MshA subfamily. As to quaternary structure, homodimer.

The enzyme catalyses 1D-myo-inositol 3-phosphate + UDP-N-acetyl-alpha-D-glucosamine = 1D-myo-inositol 2-acetamido-2-deoxy-alpha-D-glucopyranoside 3-phosphate + UDP + H(+). In terms of biological role, catalyzes the transfer of a N-acetyl-glucosamine moiety to 1D-myo-inositol 3-phosphate to produce 1D-myo-inositol 2-acetamido-2-deoxy-glucopyranoside 3-phosphate in the mycothiol biosynthesis pathway. This Mycolicibacterium smegmatis (strain ATCC 700084 / mc(2)155) (Mycobacterium smegmatis) protein is D-inositol 3-phosphate glycosyltransferase (mshA).